The primary structure comprises 184 residues: GTP cyclohydrolase 1 (184 aa).

Zn(2+) is bound by residues Cys75, His78, and Cys146.

It belongs to the GTP cyclohydrolase I family. As to quaternary structure, homomer.

The catalysed reaction is GTP + H2O = 7,8-dihydroneopterin 3'-triphosphate + formate + H(+). It participates in cofactor biosynthesis; 7,8-dihydroneopterin triphosphate biosynthesis; 7,8-dihydroneopterin triphosphate from GTP: step 1/1. This chain is GTP cyclohydrolase 1, found in Finegoldia magna (strain ATCC 29328 / DSM 20472 / WAL 2508) (Peptostreptococcus magnus).